The primary structure comprises 373 residues: ATP phosphoribosyltransferase regulatory subunit (373 aa).

Belongs to the class-II aminoacyl-tRNA synthetase family. HisZ subfamily. Heteromultimer composed of HisG and HisZ subunits.

It is found in the cytoplasm. It participates in amino-acid biosynthesis; L-histidine biosynthesis; L-histidine from 5-phospho-alpha-D-ribose 1-diphosphate: step 1/9. In terms of biological role, required for the first step of histidine biosynthesis. May allow the feedback regulation of ATP phosphoribosyltransferase activity by histidine. This Chelativorans sp. (strain BNC1) protein is ATP phosphoribosyltransferase regulatory subunit.